Consider the following 162-residue polypeptide: UPF0763 protein Sdel_0383 (162 aa).

The protein belongs to the UPF0763 family.

This Sulfurospirillum deleyianum (strain ATCC 51133 / DSM 6946 / 5175) protein is UPF0763 protein Sdel_0383.